A 213-amino-acid chain; its full sequence is Protein Syd (213 aa).

The protein belongs to the Syd family.

The protein localises to the cell inner membrane. Interacts with the SecY protein in vivo. May bind preferentially to an uncomplexed state of SecY, thus functioning either as a chelating agent for excess SecY in the cell or as a regulatory factor that negatively controls the translocase function. In Shewanella halifaxensis (strain HAW-EB4), this protein is Protein Syd.